We begin with the raw amino-acid sequence, 550 residues long: Sterol O-acyltransferase 1 (550 aa).

Methionine 1 carries the post-translational modification N-acetylmethionine. The tract at residues methionine 1–alanine 36 is disordered. The Cytoplasmic portion of the chain corresponds to methionine 1–isoleucine 138. Serine 8 is modified (phosphoserine). Residues lysine 15–leucine 34 are compositionally biased toward basic and acidic residues. Cholesterol is bound at residue histidine 137. The helical transmembrane segment at arginine 139 to aspartate 160 threads the bilayer. The Lumenal portion of the chain corresponds to tyrosine 161–lysine 180. A helical transmembrane segment spans residues phenylalanine 181–tryptophan 206. Residues alanine 207–isoleucine 218 are Cytoplasmic-facing. A helical transmembrane segment spans residues asparagine 219–leucine 244. The Lumenal segment spans residues alanine 245 to serine 252. Residues arginine 253–proline 276 form a helical membrane-spanning segment. Topologically, residues arginine 277–arginine 319 are cytoplasmic. The helical transmembrane segment at tryptophan 320 to isoleucine 352 threads the bilayer. Topologically, residues lysine 353–serine 369 are lumenal. Residues isoleucine 370–methionine 395 form a helical membrane-spanning segment. The Cytoplasmic portion of the chain corresponds to leucine 396–arginine 443. Positions phenylalanine 403–asparagine 409 match the FYXDWWN motif motif. Residues asparagine 415, arginine 418, asparagine 421, histidine 425, tyrosine 433, lysine 445, and serine 456 each contribute to the an acyl-CoA site. A helical membrane pass occupies residues phenylalanine 444–leucine 468. Histidine 460 is an active-site residue. The Lumenal portion of the chain corresponds to serine 469–valine 474. Residues leucine 475–valine 490 traverse the membrane as a helical segment. The Cytoplasmic segment spans residues asparagine 491 to lysine 496. Residues proline 497–cysteine 528 traverse the membrane as a helical segment. A disulfide bridge links cysteine 528 with cysteine 546. Topologically, residues proline 529–phenylalanine 550 are lumenal.

The protein belongs to the membrane-bound acyltransferase family. Sterol o-acyltransferase subfamily. As to quaternary structure, may form homo- or heterodimers. Interacts with UBIAD1. Expressed in most tissues, but most strongly in the adrenal gland. Expressed more strongly in liver Kupffer cells than in hepatocytes.

It is found in the endoplasmic reticulum membrane. The catalysed reaction is a sterol + a long-chain fatty acyl-CoA = a long-chain 3-hydroxysterol ester + CoA. It carries out the reaction cholesterol + an acyl-CoA = a cholesterol ester + CoA. It catalyses the reaction cholesterol + (9Z)-octadecenoyl-CoA = cholesteryl (9Z-octadecenoate) + CoA. The enzyme catalyses cholesterol + hexadecanoyl-CoA = cholesteryl hexadecanoate + CoA. The catalysed reaction is octadecanoyl-CoA + cholesterol = cholesteryl octadecanoate + CoA. It carries out the reaction (9Z,12Z)-octadecadienoyl-CoA + cholesterol = cholesteryl (9Z,12Z)-octadecadienoate + CoA. It catalyses the reaction (5Z,8Z,11Z,14Z)-eicosatetraenoyl-CoA + cholesterol = cholesteryl (5Z,8Z,11Z,14Z)-eicosatetraenoate + CoA. The enzyme catalyses (9Z)-hexadecenoyl-CoA + cholesterol = cholesteryl (9Z)-hexadecenoate + CoA. The catalysed reaction is (11Z)-octadecenoyl-CoA + cholesterol = cholesteryl (11Z)-octadecenoate + CoA. It carries out the reaction (7Z)-octadecenoyl-CoA + cholesterol = cholesteryl (7Z)-octadecenoate + CoA. Functionally, catalyzes the formation of fatty acid-cholesterol esters, which are less soluble in membranes than cholesterol. Plays a role in lipoprotein assembly and dietary cholesterol absorption. Preferentially utilizes oleoyl-CoA ((9Z)-octadecenoyl-CoA) as a substrate: shows a higher activity towards an acyl-CoA substrate with a double bond at the delta-9 position (9Z) than towards saturated acyl-CoA or an unsaturated acyl-CoA with a double bond at the delta-7 (7Z) or delta-11 (11Z) positions. This chain is Sterol O-acyltransferase 1 (SOAT1), found in Chlorocebus aethiops (Green monkey).